The chain runs to 425 residues: UDP-N-acetylglucosamine 1-carboxyvinyltransferase (425 aa).

Residue 22-23 (KN) participates in phosphoenolpyruvate binding. Residue R93 coordinates UDP-N-acetyl-alpha-D-glucosamine. The active-site Proton donor is C117. C117 bears the 2-(S-cysteinyl)pyruvic acid O-phosphothioketal mark. UDP-N-acetyl-alpha-D-glucosamine is bound by residues 122–126 (RPVDL), 162–165 (KVSV), D307, and I329.

This sequence belongs to the EPSP synthase family. MurA subfamily.

Its subcellular location is the cytoplasm. The catalysed reaction is phosphoenolpyruvate + UDP-N-acetyl-alpha-D-glucosamine = UDP-N-acetyl-3-O-(1-carboxyvinyl)-alpha-D-glucosamine + phosphate. Its pathway is cell wall biogenesis; peptidoglycan biosynthesis. Its function is as follows. Cell wall formation. Adds enolpyruvyl to UDP-N-acetylglucosamine. This is UDP-N-acetylglucosamine 1-carboxyvinyltransferase from Pasteurella multocida (strain Pm70).